The sequence spans 1426 residues: DNA-directed RNA polymerase subunit beta' (1426 aa).

The Zn(2+) site is built by Cys-71, Cys-73, Cys-86, and Cys-89. The Mg(2+) site is built by Asp-461, Asp-463, and Asp-465. Residues Cys-814, Cys-888, Cys-895, and Cys-898 each coordinate Zn(2+). The tract at residues 1392-1426 is disordered; it reads ADPIAAAESAIGLGGGEQPATSETGAGGSDPSEEG.

Belongs to the RNA polymerase beta' chain family. The RNAP catalytic core consists of 2 alpha, 1 beta, 1 beta' and 1 omega subunit. When a sigma factor is associated with the core the holoenzyme is formed, which can initiate transcription. Requires Mg(2+) as cofactor. The cofactor is Zn(2+).

The enzyme catalyses RNA(n) + a ribonucleoside 5'-triphosphate = RNA(n+1) + diphosphate. DNA-dependent RNA polymerase catalyzes the transcription of DNA into RNA using the four ribonucleoside triphosphates as substrates. The sequence is that of DNA-directed RNA polymerase subunit beta' from Alkalilimnicola ehrlichii (strain ATCC BAA-1101 / DSM 17681 / MLHE-1).